Reading from the N-terminus, the 1272-residue chain is AF4/FMR2 family member 2 (1272 aa).

2 disordered regions span residues 93–183 (IPKN…LTQD) and 200–223 (PQIG…SSGE). Polar residues predominate over residues 97–107 (SVPQNPNNKNE). A compositionally biased stretch (basic and acidic residues) spans 151–160 (SKPEWSRDSH). Residues 161–183 (NPSTVLASQASGQPNKMQTLTQD) are compositionally biased toward polar residues. Residues 212-223 (AKEDSNPKSSGE) are compositionally biased toward basic and acidic residues. Serine 391 carries the post-translational modification Phosphoserine. 4 disordered regions span residues 418-491 (KAKP…KWQL), 535-687 (TNAS…DQEE), 779-829 (SLHA…PEKK), and 842-903 (PPCI…QDKN). The span at 426–438 (VNPPLATPQPPPA) shows a compositional bias: pro residues. Low complexity predominate over residues 439 to 452 (VQASGGSGSSSESE). Threonine 478 is subject to Phosphothreonine. A compositionally biased stretch (basic and acidic residues) spans 543–558 (EPKERPLLSLIREKAR). Residues 576 to 586 (STTSETVSQRT) show a composition bias toward polar residues. Residues 616–629 (PKEKESVELHDPPR) are compositionally biased toward basic and acidic residues. Basic residues predominate over residues 630–640 (GRNKATAHKPA). Basic and acidic residues predominate over residues 818–829 (PTEVAEKIPEKK). Pro residues-rich tracts occupy residues 844 to 853 (CISPAPPHKP) and 874 to 883 (FPPPLSPLPE).

The protein belongs to the AF4 family.

It is found in the nucleus speckle. Its function is as follows. RNA-binding protein. Might be involved in alternative splicing regulation through an interaction with G-quartet RNA structure. The protein is AF4/FMR2 family member 2 (AFF2) of Pongo pygmaeus (Bornean orangutan).